A 660-amino-acid chain; its full sequence is Glycine betaine transporter (660 aa).

The Cytoplasmic portion of the chain corresponds to 1 to 13 (MPSKTSSRFANIN). A helical membrane pass occupies residues 14-34 (PNVFVSTIMIIAIFLAIVILA). The Periplasmic portion of the chain corresponds to 35 to 52 (PDAFELLTQQLKNWITES). A helical transmembrane segment spans residues 53–73 (FSWFYVLSVAFFLIVLGYIAC). Over 74–93 (SSSGKIKLGPDHSQPDYSNS) the chain is Cytoplasmic. A helical transmembrane segment spans residues 94-114 (SWFAMLFTAGMGIGLMFFGIA). Over 115 to 139 (EPIMHYVSPPSGEPETILAAQQSMR) the chain is Periplasmic. Residues 140 to 160 (VTFFHWGLHAWGIYAIVALSL) traverse the membrane as a helical segment. The Cytoplasmic segment spans residues 161–195 (SYFAYRHDLPLKIRSSLYPLIGKKIYGPMGDAVDT). The helical transmembrane segment at 196–216 (FATIGTIFGVATTLGFGVTQI) threads the bilayer. Residues 217–230 (SSGLNYLFGFEPTS) lie on the Periplasmic side of the membrane. The chain crosses the membrane as a helical span at residues 231–251 (FSKVVLIIIVSAMAALSVGLG). The Cytoplasmic segment spans residues 252–263 (LDKGVKRLAELN). A helical membrane pass occupies residues 264-284 (LVLAVTLLAFVFFTSATVYLL). Over 285–316 (QTTIQNTGQYISNLFEMTFNLYAYQPNGWIGG) the chain is Periplasmic. Residues 317-337 (WTIMYWAWWISWSPFVGMFIA) form a helical membrane-spanning segment. At 338–347 (RVSRGRTIRE) the chain is on the cytoplasmic side. A helical transmembrane segment spans residues 348-368 (FIIGVMLIPTGFTLIWMGFMG). Topologically, residues 369–401 (NAGLYSILHDGNLSLLNAVQRDSSVALFEFLHS) are periplasmic. A helical membrane pass occupies residues 402 to 422 (LPFSGVMSLLATVLVVLFFVT). At 423-446 (SADSGALVVDYLTAKSEDSPVWQR) the chain is on the cytoplasmic side. Residues 447–467 (LFWIVVMAGLAIILLLAGGLT) form a helical membrane-spanning segment. The Periplasmic segment spans residues 468–471 (ALQS). Residues 472–492 (ATIMSALPFTFIMLLICWGLI) form a helical membrane-spanning segment. At 493–660 (KALRIDSTKM…LSVMRAQTGN (168 aa)) the chain is on the cytoplasmic side.

This sequence belongs to the BCCT transporter (TC 2.A.15) family.

The protein resides in the cell inner membrane. With respect to regulation, uptake is activated by NaCl, KCl or mannose gradients across the cell membrane. Inhibited by the protonophore 3,3',4',5-tetrachlorosalicylanilide (TCS). Functionally, energy-dependent uptake of glycine betaine in response to high salinity. The polypeptide is Glycine betaine transporter (Acinetobacter baylyi (strain ATCC 33305 / BD413 / ADP1)).